Consider the following 179-residue polypeptide: RNA pyrophosphohydrolase (179 aa).

Residues 6–149 (GYRANVGIVI…KKPIYEDMLK (144 aa)) enclose the Nudix hydrolase domain. The Nudix box signature appears at 38–59 (GGIDFGESELDALFRELNEEIG).

This sequence belongs to the Nudix hydrolase family. RppH subfamily. A divalent metal cation serves as cofactor.

In terms of biological role, accelerates the degradation of transcripts by removing pyrophosphate from the 5'-end of triphosphorylated RNA, leading to a more labile monophosphorylated state that can stimulate subsequent ribonuclease cleavage. The sequence is that of RNA pyrophosphohydrolase from Ruthia magnifica subsp. Calyptogena magnifica.